Reading from the N-terminus, the 619-residue chain is Mitogen-activated protein kinase kinase kinase 2 (619 aa).

Residues 25-45 are disordered; the sequence is LSLQETRKAKSSSPKKQNDVR. S26 bears the Phosphoserine mark. Positions 43–122 constitute a PB1 domain; that stretch reads DVRVKFEHRG…KSLKILLVIN (80 aa). Residues S153, S159, and S164 each carry the phosphoserine modification. Disordered stretches follow at residues 154–173, 201–248, and 289–355; these read IIGP…IPDE, LDPL…QEFS, and RTQG…APTN. Low complexity predominate over residues 203–219; it reads PLSLSSPENSGSGSCPS. S239, S297, S311, S331, S344, and S349 each carry phosphoserine. Positions 290-299 are enriched in polar residues; that stretch reads TQGTSLRSPV. Low complexity predominate over residues 300–315; it reads SFSPTDHSLSTSSGSS. The span at 322–332 shows a compositional bias: basic and acidic residues; sequence DDSRIRRRGSD. Positions 357-617 constitute a Protein kinase domain; the sequence is RLGKLLGQGA…DELLRHMFVH (261 aa). ATP is bound by residues 362–371 and K385; that span reads LGQGAFGRVY. D483 (proton acceptor) is an active-site residue.

Belongs to the protein kinase superfamily. STE Ser/Thr protein kinase family. MAP kinase kinase kinase subfamily. In terms of assembly, interacts with PKN2; the interaction activates PKN2 kinase activity in a MAP3K2-independent kinase activity. Self-associates. Binds both upstream activators and downstream substrates in multimolecular complexes. Interacts (via the kinase catalytic domain) with STK38. Interacts with XIAP/BIRC4. It depends on Mg(2+) as a cofactor. In terms of processing, autophosphorylated. Ubiquitination by XIAP/BIRC4 does not lead to proteasomal degradation.

The protein localises to the cytoplasm. Its subcellular location is the nucleus. The catalysed reaction is L-seryl-[protein] + ATP = O-phospho-L-seryl-[protein] + ADP + H(+). The enzyme catalyses L-threonyl-[protein] + ATP = O-phospho-L-threonyl-[protein] + ADP + H(+). Its activity is regulated as follows. Activated by phosphorylation on Thr-524. In terms of biological role, component of a protein kinase signal transduction cascade. Regulates the JNK and ERK5 pathways by phosphorylating and activating MAP2K5 and MAP2K7. Plays a role in caveolae kiss-and-run dynamics. The sequence is that of Mitogen-activated protein kinase kinase kinase 2 (MAP3K2) from Homo sapiens (Human).